Here is a 1186-residue protein sequence, read N- to C-terminus: DNA excision repair protein ERCC-5 (1186 aa).

Positions 1–78 (MGVQGLWKLL…RIRPIFVFDG (78 aa)) are N-domain. Lysine 8 carries the post-translational modification N6-acetyllysine. Position 30 (aspartate 30) interacts with Mg(2+). Residues 31-67 (ISIWLNQALKGVRDRHGNSIENPHLLTLFHRLCKLLF) are DNA-binding; may bind to the undamaged single-strand DNA of the DNA repair bubble. Mg(2+) is bound at residue aspartate 77. The tract at residues 79–785 (DAPLLKKQTL…LRLFGIPYIQ (707 aa)) is spacer region. Disordered regions lie at residues 306 to 342 (ESLP…PPSP), 354 to 385 (GSSS…SISP), 404 to 473 (CAGD…SVPK), 510 to 533 (HSDA…TNSV), and 667 to 724 (QAEF…AEDS). Residues 325–336 (PCEKLKTEKEPD) are compositionally biased toward basic and acidic residues. Position 384 is a phosphoserine (serine 384). A compositionally biased stretch (basic and acidic residues) spans 454–472 (AEEHVASTNEGREPTDSVP). Serine 705 bears the Phosphoserine mark. The interval 786 to 881 (APMEAEAQCA…VTAMEILNEF (96 aa)) is I-domain. The Mg(2+) site is built by glutamate 789, glutamate 791, aspartate 810, and aspartate 812. Positions 820–836 (HVYRNFFNKNKFVEYYQ) are DNA-binding; may bind to the undamaged single-strand DNA of the DNA repair bubble. Positions 848-880 (RNKLINLAYLLGSDYTEGIPTVGCVTAMEILNE) are DNA-binding; H2TH (helix-2turn-helix) motif which binds double-stranded DNA. Aspartate 861 serves as a coordination point for Mg(2+). Residues 912-918 (TKVKKKL) form a DNA-binding; may bind double-stranded DNA region. The tract at residues 981–1009 (LKQLDAQQTQLRIDSFFRLAQQEKEDAKR) is interaction with PCNA. Positions 1011–1186 (KSQRLNRAVT…RRARGRKRKT (176 aa)) are interaction with ERCC6/CSB. Disordered stretches follow at residues 1056–1081 (QKRG…SKGK) and 1095–1186 (ESSD…KRKT). The Nuclear localization signal 1 signature appears at 1057 to 1074 (KRGITNTLEESSSLKRKR). Residues 1124-1133 (TSASDSQNSV) are compositionally biased toward polar residues. Residues 1169–1186 (FGKKRRKLRRARGRKRKT) carry the Nuclear localization signal 2 motif. Basic residues predominate over residues 1169 to 1186 (FGKKRRKLRRARGRKRKT).

Belongs to the XPG/RAD2 endonuclease family. XPG subfamily. Monomer. Homodimer. Component of the homologous recombination repair (HR) complex composed of ERCC5/XPG, BRCA2, PALB2, DSS1 and RAD51. Within the complex, interacts with BRCA2 and PALB2. Interacts with RNA polymerase II. Interacts (via C-terminus) with ERCC6/CSB; the interaction stimulates ERCC6/CSB binding to the DNA repair bubble and ERCC6/CSB ATPase activity. May form a complex composed of RNA polymerase II, ERCC6/CSB and ERCC5/XPG which associates with the DNA repair bubble during transcription-coupled nucleotide excision repair. Interacts with BRCA1; the interaction promotes the release of BRCA1 from DNA. Interacts with PCNA. Interacts with NTHL1; the interaction stimulates NTHL1 activity and NTHL1 binding to its DNA substrate. Mg(2+) is required as a cofactor.

The protein localises to the nucleus. It localises to the chromosome. Its function is as follows. Single-stranded structure-specific DNA endonuclease involved in DNA excision repair. Makes the 3'incision in DNA nucleotide excision repair (NER). Binds and bends DNA repair bubble substrate and breaks base stacking at the single-strand/double-strand DNA junction of the DNA bubble. Plays a role in base excision repair (BER) by promoting the binding of DNA glycosylase NTHL1 to its substrate and increasing NTHL1 catalytic activity that removes oxidized pyrimidines from DNA. Involved in transcription-coupled nucleotide excision repair (TCR) which allows RNA polymerase II-blocking lesions to be rapidly removed from the transcribed strand of active genes. Functions during the initial step of TCR in cooperation with ERCC6/CSB to recognized stalled RNA polymerase II. Also, stimulates ERCC6/CSB binding to the DNA repair bubble and ERCC6/CSB ATPase activity. Required for DNA replication fork maintenance and preservation of genomic stability. Involved in homologous recombination repair (HRR) induced by DNA replication stress by recruiting RAD51, BRCA2, and PALB2 to the damaged DNA site. In TFIIH stimulates the 5'-3' helicase activity of XPD/ERCC2 and the DNA translocase activity of XPB/ERCC3. During HRR, binds to the replication fork with high specificity and stabilizes it. Also, acts upstream of HRR, to promote the release of BRCA1 from DNA. In Homo sapiens (Human), this protein is DNA excision repair protein ERCC-5 (ERCC5).